A 168-amino-acid polypeptide reads, in one-letter code: Ribosome-binding factor A (168 aa).

The segment covering 122-136 (VRRDARPAGDDDPYR) has biased composition (basic and acidic residues). Positions 122–168 (VRRDARPAGDDDPYRRPRPAAGEVDELSEVDELSEVDEYGGTARQEG) are disordered. Over residues 144–159 (EVDELSEVDELSEVDE) the composition is skewed to acidic residues.

This sequence belongs to the RbfA family. As to quaternary structure, monomer. Binds 30S ribosomal subunits, but not 50S ribosomal subunits or 70S ribosomes.

The protein resides in the cytoplasm. Its function is as follows. One of several proteins that assist in the late maturation steps of the functional core of the 30S ribosomal subunit. Associates with free 30S ribosomal subunits (but not with 30S subunits that are part of 70S ribosomes or polysomes). Required for efficient processing of 16S rRNA. May interact with the 5'-terminal helix region of 16S rRNA. The sequence is that of Ribosome-binding factor A from Frankia casuarinae (strain DSM 45818 / CECT 9043 / HFP020203 / CcI3).